The sequence spans 210 residues: MRYPFWRLAVFLAACVAPVWWLYQAWIFALGPDPGKVLVENFGLATLVMLLITLAMTPLQRLTGWPGWIVVRRQLGLWCFAYVVLHMTMYALFILGLDWGQLGVELVKRPYIIVGALAFLGLLALAVTSNRYSQRRLGSRWKKLHRLVYVILGLGLLHMFWIVRADLKEWALYAGIGAILLLLRVPMIARRIPRLGGAAKAGSIKVQNNG.

The next 6 membrane-spanning stretches (helical) occupy residues 8-28 (LAVFLAACVAPVWWLYQAWIF), 37-57 (VLVENFGLATLVMLLITLAMT), 75-95 (LGLWCFAYVVLHMTMYALFIL), 110-130 (PYIIVGALAFLGLLALAVTSN), 147-167 (LVYVILGLGLLHMFWIVRADL), and 169-189 (EWALYAGIGAILLLLRVPMIA).

The protein belongs to the MsrQ family. Heterodimer of a catalytic subunit (MsrP) and a heme-binding subunit (MsrQ). The cofactor is FMN. It depends on heme b as a cofactor.

Its subcellular location is the cell inner membrane. Its function is as follows. Part of the MsrPQ system that repairs oxidized periplasmic proteins containing methionine sulfoxide residues (Met-O), using respiratory chain electrons. Thus protects these proteins from oxidative-stress damage caused by reactive species of oxygen and chlorine generated by the host defense mechanisms. MsrPQ is essential for the maintenance of envelope integrity under bleach stress, rescuing a wide series of structurally unrelated periplasmic proteins from methionine oxidation. MsrQ provides electrons for reduction to the reductase catalytic subunit MsrP, using the quinone pool of the respiratory chain. The chain is Protein-methionine-sulfoxide reductase heme-binding subunit MsrQ from Pseudomonas syringae pv. tomato (strain ATCC BAA-871 / DC3000).